The chain runs to 98 residues: NADH-ubiquinone oxidoreductase chain 4L (98 aa).

The next 3 helical transmembrane spans lie at 1 to 21, 29 to 49, and 61 to 81; these read MSMVYFNIFMAFTVSFVGLLM, SLLCLEGMMLSLFVMMSMTIL, and IILLVFAACEAALGLSLLVMV.

It belongs to the complex I subunit 4L family. As to quaternary structure, core subunit of respiratory chain NADH dehydrogenase (Complex I) which is composed of 45 different subunits.

It localises to the mitochondrion inner membrane. It carries out the reaction a ubiquinone + NADH + 5 H(+)(in) = a ubiquinol + NAD(+) + 4 H(+)(out). Core subunit of the mitochondrial membrane respiratory chain NADH dehydrogenase (Complex I) which catalyzes electron transfer from NADH through the respiratory chain, using ubiquinone as an electron acceptor. Part of the enzyme membrane arm which is embedded in the lipid bilayer and involved in proton translocation. This Arctocephalus australis (South American fur seal) protein is NADH-ubiquinone oxidoreductase chain 4L (MT-ND4L).